We begin with the raw amino-acid sequence, 266 residues long: Glutamate racemase (266 aa).

Substrate is bound by residues 9–10 (DS) and 41–42 (YG). Cys-72 serves as the catalytic Proton donor/acceptor. 73-74 (NT) is a substrate binding site. Residue Cys-184 is the Proton donor/acceptor of the active site. 185-186 (TH) provides a ligand contact to substrate.

Belongs to the aspartate/glutamate racemases family. As to quaternary structure, homodimer.

It catalyses the reaction L-glutamate = D-glutamate. It functions in the pathway cell wall biogenesis; peptidoglycan biosynthesis. Provides the (R)-glutamate required for cell wall biosynthesis. The protein is Glutamate racemase of Staphylococcus aureus (strain MRSA252).